The sequence spans 455 residues: Mitochondrial distribution and morphology protein 10 (455 aa).

Disordered regions lie at residues 216 to 249 (WETT…EDAV), 278 to 311 (IRFS…PSPA), and 377 to 399 (PRSS…PLGE). A compositionally biased stretch (low complexity) spans 217-227 (ETTNGENGTNT). Positions 228–237 (SAPGNASNSR) are enriched in polar residues. The span at 291-301 (AQIPPPSPFTP) shows a compositional bias: pro residues.

Belongs to the MDM10 family. In terms of assembly, component of the ER-mitochondria encounter structure (ERMES) or MDM complex, composed of MMM1, MDM10, MDM12 and MDM34. Associates with the mitochondrial outer membrane sorting assembly machinery SAM(core) complex.

The protein resides in the mitochondrion outer membrane. Its function is as follows. Component of the ERMES/MDM complex, which serves as a molecular tether to connect the endoplasmic reticulum and mitochondria. Components of this complex are involved in the control of mitochondrial shape and protein biogenesis and may function in phospholipid exchange. MDM10 is involved in the late assembly steps of the general translocase of the mitochondrial outer membrane (TOM complex). Functions in the TOM40-specific route of the assembly of outer membrane beta-barrel proteins, including the association of TOM40 with the receptor TOM22 and small TOM proteins. Can associate with the SAM(core) complex as well as the MDM12-MMM1 complex, both involved in late steps of the major beta-barrel assembly pathway, that is responsible for biogenesis of all outer membrane beta-barrel proteins. May act as a switch that shuttles between both complexes and channels precursor proteins into the TOM40-specific pathway. Plays a role in mitochondrial morphology and in the inheritance of mitochondria. This chain is Mitochondrial distribution and morphology protein 10, found in Coprinopsis cinerea (strain Okayama-7 / 130 / ATCC MYA-4618 / FGSC 9003) (Inky cap fungus).